We begin with the raw amino-acid sequence, 636 residues long: Chaperone protein DnaK (636 aa).

Thr-198 carries the post-translational modification Phosphothreonine; by autocatalysis. The segment covering Gln-602–Ala-613 has biased composition (low complexity). Residues Gln-602–Lys-636 form a disordered region. Residues His-614–Asp-625 show a composition bias toward basic and acidic residues. A compositionally biased stretch (acidic residues) spans Ala-626 to Lys-636.

The protein belongs to the heat shock protein 70 family.

Its function is as follows. Acts as a chaperone. The sequence is that of Chaperone protein DnaK from Geotalea daltonii (strain DSM 22248 / JCM 15807 / FRC-32) (Geobacter daltonii).